We begin with the raw amino-acid sequence, 784 residues long: MIHPVRRALAVAASRAPRQFLAAASRTTSVRSVRAAAASGSYYSTTSRRLQDAFPSQLENLASSTLPKVVPQVPQTLTEKIVQRYSVGLAPGKKVKSGDYVTLQPHHCMTHDNSWPVAMKFMSIGASKIHDNRQVVMTLDHDVQNKSEANLKKYRQIEEFANTHGVDFYPAGRGIGHQIMVEEGYAWPGTVTVASDSHSNMYGGVGCLGTPMVRTDAASIWATGKTWWQIPPIAKVTFTGLLPPGVTGKDVIVALCGLFNNDDVLNHAIEFTGAEETMRSIPVDDRLTIANMTTEWGALSGLFPIDAVLASWMRAKATVTAMEHPELGDKAKFTHAKIDALLENPLVADPGATYAKQLYLNLSTLSPFVAGPNSVKIATPLKDLEAQNLKLDKAYLVSCTNSRASDIAAAARVFKDAAADNNGVIPKVAPGVKFYIAAASLLEQKQAEDSGDWQVLLDAGAEPLPSGCGPCIGLGTGLLEPGEIGISASNRNFKGRMGSTDAKAYLASPEVVAASALKGKIAGPGWYQKPEGVEKVIIGEGNGVVEQDKAMSIEDALDKIIAEAESLIANAEAGLTPESTSSSSSSSSSSEEESLTEILPGFPEAISGEIIFCDADNINTDGIYPGKYTYQDNITPAKMAEVCMENYDASFGSIARAGDILVTGFNFGCGSSREQAATAILAKQIPLVVSGSFGNIFSRNSINNALMGVEVPKLVQRLREEFGDKVATRRTGWKLTWDVRRSKVVVEEASGKKWEQKVGELPPNVQEIIARGGLEKWVKSQIEA.

Residues 1–32 constitute a mitochondrion transit peptide; the sequence is MIHPVRRALAVAASRAPRQFLAAASRTTSVRS. Positions 399, 468, and 471 each coordinate [4Fe-4S] cluster. The disordered stretch occupies residues 572-596; that stretch reads EAGLTPESTSSSSSSSSSSEEESLT. Residues 578 to 589 are compositionally biased toward low complexity; it reads ESTSSSSSSSSS.

The protein belongs to the aconitase/IPM isomerase family. [4Fe-4S] cluster serves as cofactor.

It localises to the mitochondrion. It catalyses the reaction (2R,3S)-homoisocitrate = cis-homoaconitate + H2O. The protein operates within amino-acid biosynthesis; L-lysine biosynthesis via AAA pathway; L-alpha-aminoadipate from 2-oxoglutarate: step 3/5. Catalyzes the reversible hydration of cis-homoaconitate to (2R,3S)-homoisocitrate, a step in the alpha-aminoadipate pathway for lysine biosynthesis. The polypeptide is Homoaconitase, mitochondrial (lys-4) (Neurospora crassa (strain ATCC 24698 / 74-OR23-1A / CBS 708.71 / DSM 1257 / FGSC 987)).